The sequence spans 78 residues: Metallothionein-like protein type 2 (78 aa).

It belongs to the metallothionein superfamily. Type 15 family.

Metallothioneins have a high content of cysteine residues that bind various heavy metals. This chain is Metallothionein-like protein type 2, found in Actinidia deliciosa (Kiwi).